A 180-amino-acid chain; its full sequence is NAD(P)H-quinone oxidoreductase subunit I, chloroplastic (180 aa).

2 consecutive 4Fe-4S ferredoxin-type domains span residues 55 to 84 (GRIH…VDWR) and 95 to 124 (LNYS…MTEE). The [4Fe-4S] cluster site is built by cysteine 64, cysteine 67, cysteine 70, cysteine 74, cysteine 104, cysteine 107, cysteine 110, and cysteine 114.

The protein belongs to the complex I 23 kDa subunit family. NDH is composed of at least 16 different subunits, 5 of which are encoded in the nucleus. Requires [4Fe-4S] cluster as cofactor.

The protein resides in the plastid. The protein localises to the chloroplast thylakoid membrane. It catalyses the reaction a plastoquinone + NADH + (n+1) H(+)(in) = a plastoquinol + NAD(+) + n H(+)(out). The enzyme catalyses a plastoquinone + NADPH + (n+1) H(+)(in) = a plastoquinol + NADP(+) + n H(+)(out). In terms of biological role, NDH shuttles electrons from NAD(P)H:plastoquinone, via FMN and iron-sulfur (Fe-S) centers, to quinones in the photosynthetic chain and possibly in a chloroplast respiratory chain. The immediate electron acceptor for the enzyme in this species is believed to be plastoquinone. Couples the redox reaction to proton translocation, and thus conserves the redox energy in a proton gradient. The protein is NAD(P)H-quinone oxidoreductase subunit I, chloroplastic of Liriodendron tulipifera (Tuliptree).